Here is a 332-residue protein sequence, read N- to C-terminus: Cysteine and histidine-rich domain-containing protein 1 (332 aa).

N-acetylalanine is present on A2. Residues 2 to 77 form an interaction with PPP5C region; it reads ALLCYNRGCG…KPPEPVKPEV (76 aa). Residues C5, C10, C24, H27, C42, and C43 each contribute to the Zn(2+) site. CHORD domains follow at residues 5–64 and 157–216; these read CYNR…KGRH and CKNG…TGKH. T47 is subject to Phosphothreonine. The residue at position 51 (S51) is a Phosphoserine. C59, H64, C157, C162, C176, H179, C194, C195, C211, and H216 together coordinate Zn(2+). Positions 61–82 are disordered; sequence KGRHNSEKPPEPVKPEVKTTEK. A compositionally biased stretch (basic and acidic residues) spans 64-82; sequence HNSEKPPEPVKPEVKTTEK. Positions 65 to 316 are interaction with HSP90AA1 and HSP90AB1; sequence NSEKPPEPVK…AEPMQWASLE (252 aa). A CS domain is found at 227 to 316; the sequence is VVPCRHDWHQ…AEPMQWASLE (90 aa).

In terms of assembly, interacts with HSP90AA1, HSP90AB1, PPP5C, ROCK1 and ROCK2.

Its function is as follows. Regulates centrosome duplication, probably by inhibiting the kinase activity of ROCK2. Proposed to act as co-chaperone for HSP90. May play a role in the regulation of NOD1 via a HSP90 chaperone complex. In vitro, has intrinsic chaperone activity. This function may be achieved by inhibiting association of ROCK2 with NPM1. Plays a role in ensuring the localization of the tyrosine kinase receptor EGFR to the plasma membrane, and thus ensures the subsequent regulation of EGFR activity and EGF-induced actin cytoskeleton remodeling. Involved in stress response. Prevents tumorigenesis. This chain is Cysteine and histidine-rich domain-containing protein 1 (CHORDC1), found in Sus scrofa (Pig).